The chain runs to 176 residues: MSVNMDELKHQVMINQFVLTAGCAADQAKQLLQAAHWQFETALSAFFQETNIPYSHHHQMMCTPANTPATPPNFPDALTMFSRLKASESFHSGGSSGSPMATSATSPPPHFPHATGSFATPSWPTAASPPGGPQHLQPQPPLWTPAPPSPTSDWPPLAPQQATSEPRAHPAMEAER.

Composition is skewed to low complexity over residues 88–105 (ESFH…TSAT) and 120–137 (TPSW…QHLQ). Positions 88–176 (ESFHSGGSSG…RAHPAMEAER (89 aa)) are disordered. Positions 138-150 (PQPPLWTPAPPSP) are enriched in pro residues. Residues 166-176 (PRAHPAMEAER) are compositionally biased toward basic and acidic residues.

This sequence belongs to the UBALD family.

This is UBA-like domain-containing protein 1 (Ubald1) from Rattus norvegicus (Rat).